The chain runs to 322 residues: Interferon regulatory factor 1 (322 aa).

Positions 5-113 (RMRMRPWLEM…SAVRVYRMLP (109 aa)) form a DNA-binding region, IRF tryptophan pentad repeat. Residue lysine 78 is modified to N6-acetyllysine. The segment at 92–164 (EEVKDQSRNK…STLPDDHSSY (73 aa)) is disordered. The segment covering 141-157 (GESSPDTFSDGLSSSTL) has biased composition (polar residues). Glycyl lysine isopeptide (Lys-Gly) (interchain with G-Cter in SUMO) cross-links involve residues lysine 276 and lysine 296.

This sequence belongs to the IRF family. In terms of assembly, monomer. Homodimer. Interacts with EP300. Interacts with MYD88. Interacts with PIAS3. Interacts with SPOP. Phosphorylated by CK2 and this positively regulates its activity. Post-translationally, sumoylation represses the transcriptional activity and displays enhanced resistance to protein degradation. Sumoylated by UBE2I/UBC9 and SUMO1. Inactivates the tumor suppressor activity. Elevated levels in tumor cells. Major site is Lys-276. Sumoylation is enhanced by PIAS3. Desumoylated by SENP1 in tumor cells and appears to compete with ubiquitination on C-terminal sites. In terms of processing, ubiquitinated in a SPOP-depedent manner. Appears to compete with sumoylation on C-terminal sites.

It localises to the nucleus. It is found in the cytoplasm. Its activity is regulated as follows. Activated by MYD88. Transcriptional regulator which displays a remarkable functional diversity in the regulation of cellular responses. Regulates transcription of IFN and IFN-inducible genes, host response to viral and bacterial infections, regulation of many genes expressed during hematopoiesis, inflammation, immune responses and cell proliferation and differentiation, regulation of the cell cycle and induction of growth arrest and programmed cell death following DNA damage. Stimulates both innate and acquired immune responses through the activation of specific target genes and can act as a transcriptional activator and repressor regulating target genes by binding to an interferon-stimulated response element (ISRE) in their promoters. Has an essentail role in IFNG-dependent immunity to mycobacteria. Binds to a consensus sequence in gene promoters. Its target genes for transcriptional activation activity include: genes involved in anti-viral response, such as IFN-alpha/beta, RIGI, TNFSF10/TRAIL, ZBP1, OAS1/2, PIAS1/GBP, EIF2AK2/PKR and RSAD2/viperin; antibacterial response, such as GBP2, GBP5 and NOS2/INOS; anti-proliferative response, such as p53/TP53, LOX and CDKN1A; apoptosis, such as BBC3/PUMA, CASP1, CASP7 and CASP8; immune response, such as IL7, IL12A/B and IL15, PTGS2/COX2 and CYBB; DNA damage responses and DNA repair, such as POLQ/POLH; MHC class I expression, such as TAP1, PSMB9/LMP2, PSME1/PA28A, PSME2/PA28B and B2M and MHC class II expression, such as CIITA; metabolic enzymes, such as ACOD1/IRG1. Represses genes involved in anti-proliferative response, such as BIRC5/survivin, CCNB1, CCNE1, CDK1, CDK2 and CDK4 and in immune response, such as FOXP3, IL4, ANXA2 and TLR4. Stimulates p53/TP53-dependent transcription through enhanced recruitment of EP300 leading to increased acetylation of p53/TP53. Plays an important role in immune response directly affecting NK maturation and activity, macrophage production of IL12, Th1 development and maturation of CD8+ T-cells. Also implicated in the differentiation and maturation of dendritic cells and in the suppression of regulatory T (Treg) cells development. Acts as a tumor suppressor and plays a role not only in antagonism of tumor cell growth but also in stimulating an immune response against tumor cells. This chain is Interferon regulatory factor 1 (IRF1), found in Sus scrofa (Pig).